The primary structure comprises 391 residues: Glycosyltransferase afumC (391 aa).

This sequence belongs to the afumC glycosyltransferase family.

It functions in the pathway secondary metabolite biosynthesis. Its activity is regulated as follows. Activity is significantly decreased by addition of divalent cations such as Mg(2+), Mn(2+), Zn(2+), Ca(2+), Co(2+), Cu(2+), and Ni(2+); while Fe(2+) has little effect. Its function is as follows. Glycosyltransferase; part of the gene cluster that mediates the biosynthesis fumihopaside A, a hopane-type glucoside that enhances the thermotolerance and UV resistance of N.fumigata. The first step of fumihopaside A biosynthesis is performed by the squalene hopane cyclase afumA that catalyzes the cyclization of 3S-oxidosqualene into the hopene 21-beta-H-hopane-3-beta,22-diol. The cytochrome P450 monooxygenase afumB is responsible for both hydroxylation at C-24 and oxidations at C-30 of the afumA product. The glycosyltransferase afumC then catalyzes the glycosylation at C-24, using UDP-D-glucose as a donor, to produce fumihopaside A. AfumC is also able to accept UDP-D-galactose and UDP-D-glucuronic acid as donors to yield minor derivatives. Fumihopaside B, another minor derivative produced, is different from fumihopaside A due to the presence of a double bond between C-22 and C-29. This chain is Glycosyltransferase afumC, found in Aspergillus fumigatus (strain CBS 144.89 / FGSC A1163 / CEA10) (Neosartorya fumigata).